Reading from the N-terminus, the 629-residue chain is tRNA uridine 5-carboxymethylaminomethyl modification enzyme MnmG (629 aa).

FAD-binding positions include Gly13–Gly18, Val125, and Ser180. Gly273–Phe287 contacts NAD(+). Residue Gln370 coordinates FAD.

The protein belongs to the MnmG family. As to quaternary structure, homodimer. Heterotetramer of two MnmE and two MnmG subunits. FAD is required as a cofactor.

Its subcellular location is the cytoplasm. Its function is as follows. NAD-binding protein involved in the addition of a carboxymethylaminomethyl (cmnm) group at the wobble position (U34) of certain tRNAs, forming tRNA-cmnm(5)s(2)U34. This is tRNA uridine 5-carboxymethylaminomethyl modification enzyme MnmG from Psychromonas ingrahamii (strain DSM 17664 / CCUG 51855 / 37).